The sequence spans 629 residues: Chaperone protein HtpG (629 aa).

An a; substrate-binding region spans residues 1–335; the sequence is MSEVETSVEK…TADLPLNVSR (335 aa). The segment at 336 to 551 is b; sequence EMIQESPLLA…EQGPDRQLQK (216 aa). The interval 552–629 is c; sequence MLQDAGRIEG…SRVFGRALKE (78 aa).

This sequence belongs to the heat shock protein 90 family. In terms of assembly, homodimer.

The protein localises to the cytoplasm. Functionally, molecular chaperone. Has ATPase activity. This chain is Chaperone protein HtpG, found in Rhizobium meliloti (strain 1021) (Ensifer meliloti).